We begin with the raw amino-acid sequence, 211 residues long: Protein DEHYDRATION-INDUCED 19 homolog 7 (211 aa).

Position 113 is a phosphothreonine (T113). Positions 163-194 (GDSVAQVSPKDTSKSKIQQESFSNEDQEKAKK) are disordered. The segment covering 167-186 (AQVSPKDTSKSKIQQESFSN) has biased composition (polar residues).

This sequence belongs to the Di19 family. In terms of processing, not phosphorylated in vitro by CPK3 or CPK11. In terms of tissue distribution, expressed in seedlings, roots, leaves, stems, flowers and siliques.

It is found in the nucleus. Involved in both red and blue light signaling. The sequence is that of Protein DEHYDRATION-INDUCED 19 homolog 7 (DI19-7) from Arabidopsis thaliana (Mouse-ear cress).